The primary structure comprises 308 residues: D-alanine--D-alanine ligase (308 aa).

In terms of domain architecture, ATP-grasp spans 105–302; sequence KAIFRSLGLA…FPDLCERILD (198 aa). 133–188 serves as a coordination point for ATP; that stretch reads DLPFGLPCVVKPAGEGSSVGVHLVNEAAELGPACRDAASHAGDVIVERYVKGTEVD. Asp-256, Glu-269, and Asn-271 together coordinate Mg(2+).

It belongs to the D-alanine--D-alanine ligase family. The cofactor is Mg(2+). It depends on Mn(2+) as a cofactor.

It localises to the cytoplasm. It carries out the reaction 2 D-alanine + ATP = D-alanyl-D-alanine + ADP + phosphate + H(+). It participates in cell wall biogenesis; peptidoglycan biosynthesis. Functionally, cell wall formation. The chain is D-alanine--D-alanine ligase from Anaeromyxobacter dehalogenans (strain 2CP-1 / ATCC BAA-258).